The following is a 373-amino-acid chain: Flagellar P-ring protein (373 aa).

The first 26 residues, 1 to 26 (MKLFFRFLTLVAVLAMSLADVAPAWA), serve as a signal peptide directing secretion.

It belongs to the FlgI family. The basal body constitutes a major portion of the flagellar organelle and consists of four rings (L,P,S, and M) mounted on a central rod.

The protein localises to the periplasm. Its subcellular location is the bacterial flagellum basal body. Functionally, assembles around the rod to form the L-ring and probably protects the motor/basal body from shearing forces during rotation. This is Flagellar P-ring protein from Rhizobium leguminosarum bv. trifolii (strain WSM2304).